A 539-amino-acid chain; its full sequence is Protein PNS1 (539 aa).

Residues 1–38 (MPLNEKYERPPQPPPAYDPNHRPPSSSENSAAANVNDG) form a disordered region. Topologically, residues 1-81 (MPLNEKYERP…NDNKPRWNDW (81 aa)) are cytoplasmic. A compositionally biased stretch (low complexity) spans 25-36 (SSSENSAAANVN). Residues 82-102 (PFTIFFLCTVGGFIAIAAITL) traverse the membrane as a helical segment. The Extracellular segment spans residues 103 to 129 (RAWSQTYSSTGSGIYDGVNTGTLNTNA). A helical membrane pass occupies residues 130–150 (AILLVFVCIIALVFSVLGLTL). Residues 151–157 (CRIFPKQ) lie on the Cytoplasmic side of the membrane. Residues 158–178 (FIYCGMVINLVASLGTAIMYM) form a helical membrane-spanning segment. Residues 179–182 (SLRY) are Extracellular-facing. A helical membrane pass occupies residues 183-203 (WSAGIVFLVFTFMTAWCYWGM). Residues 204–226 (RSRIPLSVAVLKVVVDAMKKCPQ) are Cytoplasmic-facing. Residues 227 to 247 (IFFVSFVGALVASAFGFLFSA) form a helical membrane-spanning segment. Residues 248–274 (VIVATYIKYDPNSSNGGCDVSGGSCSH) lie on the Extracellular side of the membrane. N-linked (GlcNAc...) asparagine glycosylation is present at Asn-259. Residues 275–295 (SKLIGVLVVVFFCGYYISEVI) traverse the membrane as a helical segment. Topologically, residues 296–332 (RNVIHCVISGVFGSWYYMSKSDQGMPRWPAFGALKRA) are cytoplasmic. Residues 333 to 353 (MTYSFGSICFGSLLVALIDLL) traverse the membrane as a helical segment. The Extracellular portion of the chain corresponds to 354 to 371 (RQILQMIRHDVTSSGGGQ). Residues 372-392 (IAIQILFMVFDWIIGFLKWLA) traverse the membrane as a helical segment. The Cytoplasmic segment spans residues 393 to 436 (EYFNHYAYSFIALYGKPYLRAAKETWYMLREKGMDALINDNLIN). The helical transmembrane segment at 437–457 (IALGLFSMFASYMTALFTFLY) threads the bilayer. At 458–473 (LRFTSPQYNSNGAYNG) the chain is on the extracellular side. The chain crosses the membrane as a helical span at residues 474-494 (ALMAFSFVIALQICNIATEAI). Residues 495–539 (RSGTATFFVALGNDPEVFHHSYPHRFDEIFRAYPDVLRKLSHQNV) lie on the Cytoplasmic side of the membrane.

The protein belongs to the CTL (choline transporter-like) family.

It localises to the cell membrane. In terms of biological role, probably involved in transport through the plasma membrane. The polypeptide is Protein PNS1 (PNS1) (Saccharomyces cerevisiae (strain ATCC 204508 / S288c) (Baker's yeast)).